Reading from the N-terminus, the 328-residue chain is Tetraacyldisaccharide 4'-kinase (328 aa).

55–62 provides a ligand contact to ATP; that stretch reads TAGGNGKT.

Belongs to the LpxK family.

The enzyme catalyses a lipid A disaccharide + ATP = a lipid IVA + ADP + H(+). The protein operates within glycolipid biosynthesis; lipid IV(A) biosynthesis; lipid IV(A) from (3R)-3-hydroxytetradecanoyl-[acyl-carrier-protein] and UDP-N-acetyl-alpha-D-glucosamine: step 6/6. Transfers the gamma-phosphate of ATP to the 4'-position of a tetraacyldisaccharide 1-phosphate intermediate (termed DS-1-P) to form tetraacyldisaccharide 1,4'-bis-phosphate (lipid IVA). The protein is Tetraacyldisaccharide 4'-kinase of Shigella boydii serotype 4 (strain Sb227).